A 357-amino-acid chain; its full sequence is Glucose-6-phosphatase catalytic subunit 1 (357 aa).

Topologically, residues 1 to 28 are lumenal; it reads MEKGMNVLHDFGIQSTHYLQVNYQNSQD. The chain crosses the membrane as a helical span at residues 29-49; sequence WFILVSVIADLRNAFYVLFPI. Over 50–60 the chain is Cytoplasmic; the sequence is WFHLREAVGIK. Residues 61–81 form a helical membrane-spanning segment; sequence LLWVAVIGDWLNLVFKWILFG. The Lumenal portion of the chain corresponds to 82–117; sequence QRPYWWVLDTDYYSNTSAPLIKQFPVTCETGPGSPS. Arg-83 contacts substrate. The N-linked (GlcNAc...) asparagine glycan is linked to Asn-96. A helical transmembrane segment spans residues 118 to 138; it reads GHAMGTAGVYYVMVTSTLSIF. Catalysis depends on His-119, which acts as the Proton donor. The Cytoplasmic portion of the chain corresponds to 139–147; that stretch reads RGKKKPTYR. The chain crosses the membrane as a helical span at residues 148 to 168; it reads FRCLNVMLWLGFWVVQLNVCL. Residues 169-170 are Lumenal-facing; that stretch reads SR. A substrate-binding site is contributed by Arg-170. A helical membrane pass occupies residues 171 to 191; sequence IYLAAHFPHQVVAGVLSGIAV. The active-site Nucleophile is His-176. Over 192–209 the chain is Cytoplasmic; the sequence is AETFRHIQSIYNASLKKY. A helical transmembrane segment spans residues 210-230; it reads FLITCFLFSFAIGFYLLLKWL. The Lumenal segment spans residues 231–254; the sequence is GVDLLWTLEKAKRRCERPEWVHID. Residues 255–275 form a helical membrane-spanning segment; sequence TTPFASLLKNLGTLFGLGLAL. The Cytoplasmic segment spans residues 276–291; the sequence is NSSMYRESCKGKLSKW. A helical transmembrane segment spans residues 292-312; it reads FPFRLSCIVASLVLLHLFDSL. The Lumenal portion of the chain corresponds to 313–320; sequence KPPSQIEL. The chain crosses the membrane as a helical span at residues 321 to 341; the sequence is IFYVLSFCKSAAVPLASVSLI. The Cytoplasmic portion of the chain corresponds to 342–357; the sequence is PYCLAWVLGQPNKKTV. The Prevents secretion from ER signature appears at 354-357; the sequence is KKTV.

Belongs to the glucose-6-phosphatase family.

The protein localises to the endoplasmic reticulum membrane. The catalysed reaction is D-glucose 6-phosphate + H2O = D-glucose + phosphate. Its pathway is carbohydrate biosynthesis; gluconeogenesis. In terms of biological role, hydrolyzes glucose-6-phosphate to glucose in the endoplasmic reticulum. Forms with the glucose-6-phosphate transporter (SLC37A4/G6PT) the complex responsible for glucose production in the terminal step of glycogenolysis and gluconeogenesis. Hence, it is the key enzyme in homeostatic regulation of blood glucose levels. This Bos taurus (Bovine) protein is Glucose-6-phosphatase catalytic subunit 1 (G6PC1).